The chain runs to 202 residues: Large ribosomal subunit protein bL25 (202 aa).

It belongs to the bacterial ribosomal protein bL25 family. CTC subfamily. As to quaternary structure, part of the 50S ribosomal subunit; part of the 5S rRNA/L5/L18/L25 subcomplex. Contacts the 5S rRNA. Binds to the 5S rRNA independently of L5 and L18.

Its function is as follows. This is one of the proteins that binds to the 5S RNA in the ribosome where it forms part of the central protuberance. In Methylococcus capsulatus (strain ATCC 33009 / NCIMB 11132 / Bath), this protein is Large ribosomal subunit protein bL25.